Reading from the N-terminus, the 323-residue chain is Cyclin-H (323 aa).

Ser-5 is modified (phosphoserine; by CDK8). Ser-132 bears the Phosphoserine mark. The interval Tyr-297–Leu-323 is disordered. Residues Tyr-302–Glu-311 are compositionally biased toward basic and acidic residues. At Ser-304 the chain carries Phosphoserine; by CDK8. Over residues Glu-312–Leu-323 the composition is skewed to acidic residues. Residue Thr-315 is modified to Phosphothreonine. Ser-322 carries the post-translational modification Phosphoserine.

Belongs to the cyclin family. Cyclin C subfamily. In terms of assembly, associates primarily with CDK7 and MAT1 to form the CAK complex. CAK can further associate with the core-TFIIH to form the TFIIH basal transcription factor.

The protein resides in the nucleus. Its function is as follows. Regulates CDK7, the catalytic subunit of the CDK-activating kinase (CAK) enzymatic complex. CAK activates the cyclin-associated kinases CDK1, CDK2, CDK4 and CDK6 by threonine phosphorylation. CAK complexed to the core-TFIIH basal transcription factor activates RNA polymerase II by serine phosphorylation of the repetitive C-terminal domain (CTD) of its large subunit (POLR2A), allowing its escape from the promoter and elongation of the transcripts. Involved in cell cycle control and in RNA transcription by RNA polymerase II. Its expression and activity are constant throughout the cell cycle. The polypeptide is Cyclin-H (CCNH) (Homo sapiens (Human)).